Reading from the N-terminus, the 688-residue chain is Elongation factor G (688 aa).

The tr-type G domain maps to Glu8 to Cys282. Residues Ala17 to Thr24, Asp81 to His85, and Asn135 to Asp138 each bind GTP.

The protein belongs to the TRAFAC class translation factor GTPase superfamily. Classic translation factor GTPase family. EF-G/EF-2 subfamily.

It is found in the cytoplasm. Its function is as follows. Catalyzes the GTP-dependent ribosomal translocation step during translation elongation. During this step, the ribosome changes from the pre-translocational (PRE) to the post-translocational (POST) state as the newly formed A-site-bound peptidyl-tRNA and P-site-bound deacylated tRNA move to the P and E sites, respectively. Catalyzes the coordinated movement of the two tRNA molecules, the mRNA and conformational changes in the ribosome. This chain is Elongation factor G, found in Aster yellows witches'-broom phytoplasma (strain AYWB).